The sequence spans 641 residues: WW domain-binding protein 11 (641 aa).

Residues Met1–Ser11 are compositionally biased toward polar residues. The tract at residues Met1–Arg37 is disordered. The interval Met1 to Leu45 is required for nuclear import. Residue Lys13 is modified to N6-acetyllysine. The span at Arg28–Arg37 shows a compositional bias: basic residues. The stretch at Glu75–His133 forms a coiled coil. A Phosphoserine modification is found at Ser181. A disordered region spans residues His188–Gln213. Arg192 bears the Omega-N-methylarginine mark. A compositionally biased stretch (pro residues) spans Arg192 to Gln210. Residues Arg217 to Phe221 are interaction with PP1. Residue Tyr236 is modified to Phosphotyrosine. Residues Tyr236–Ser550 form a disordered region. Ser237 is subject to Phosphoserine. Positions Ser253 to Asp263 are enriched in acidic residues. Residues Thr276 to Ser304 show a composition bias toward basic and acidic residues. A phosphoserine mark is found at Ser279 and Ser283. Positions Leu306 to Phe310 are interaction with PP1. A compositionally biased stretch (acidic residues) spans Glu351–Glu365. 3 positions are modified to phosphoserine: Ser353, Ser361, and Ser364. Basic and acidic residues predominate over residues Ala366–Ser380. A compositionally biased stretch (low complexity) spans Asp381 to Ala404. Composition is skewed to pro residues over residues Pro405–Met447, Arg456–Pro504, and Pro510–Asn530. A PGR motif is present at residues Pro455–Arg466. Residue Lys557 forms a Glycyl lysine isopeptide (Lys-Gly) (interchain with G-Cter in SUMO2) linkage. The residue at position 565 (Lys565) is an N6-acetyllysine. Residue Lys572 forms a Glycyl lysine isopeptide (Lys-Gly) (interchain with G-Cter in SUMO2) linkage. Residues Glu588–Ala620 form a disordered region. Position 600 is a phosphoserine (Ser600). A required for nuclear export region spans residues Phe633–Leu641.

As to quaternary structure, interacts via the PGR motif with PQBP1 in the nucleus. Interacts with the WW domains of WBP4. Interacts with PPP1CA, PPP1CB and PPP1CC. Ubiquitously expressed, with highest levels in testis.

The protein resides in the nucleus. Its subcellular location is the cytoplasm. Its function is as follows. Activates pre-mRNA splicing. May inhibit PP1 phosphatase activity. The chain is WW domain-binding protein 11 (Wbp11) from Mus musculus (Mouse).